A 254-amino-acid chain; its full sequence is Uracil-DNA glycosylase (254 aa).

The active-site Proton acceptor is D91.

This sequence belongs to the uracil-DNA glycosylase (UDG) superfamily. UNG family.

It is found in the host nucleus. It carries out the reaction Hydrolyzes single-stranded DNA or mismatched double-stranded DNA and polynucleotides, releasing free uracil.. Functionally, excises uracil residues from the DNA which can arise as a result of misincorporation of dUMP residues by DNA polymerase or deamination of cytosines. Therefore may reduce deleterious uracil incorporation into the viral genome, particularly in terminally differentiated cells which lack DNA repair enzymes. This Homo sapiens (Human) protein is Uracil-DNA glycosylase (U81).